A 263-amino-acid polypeptide reads, in one-letter code: 3'-5' ssDNA/RNA exonuclease TatD (263 aa).

3 residues coordinate a divalent metal cation: E91, H127, and H152.

The protein belongs to the metallo-dependent hydrolases superfamily. TatD-type hydrolase family. TatD subfamily. In terms of assembly, monomer. Requires Mg(2+) as cofactor.

Its subcellular location is the cytoplasm. In terms of biological role, 3'-5' exonuclease that prefers single-stranded DNA and RNA. May play a role in the H(2)O(2)-induced DNA damage repair. The protein is 3'-5' ssDNA/RNA exonuclease TatD of Cronobacter turicensis (strain DSM 18703 / CCUG 55852 / LMG 23827 / z3032).